We begin with the raw amino-acid sequence, 286 residues long: L-cysteine S-thiosulfotransferase subunit SoxA (286 aa).

Positions 1–26 are cleaved as a signal peptide; sequence MTVSKRFLAPVFAMVGGLVLAFSANA. Positions 80-166 constitute a Cytochrome c domain; sequence LAVERGADIW…ALTSYIKHQS (87 aa). The heme site is built by cysteine 100, cysteine 103, histidine 104, cysteine 138, cysteine 202, cysteine 205, and histidine 206. Arginine 243 is a binding site for substrate. Cysteine 247 lines the heme pocket. Cysteine 247 acts as the Cysteine persulfide intermediate in catalysis.

This sequence belongs to the SoxA family. In terms of assembly, heterodimer of SoxA and SoxX. Requires heme as cofactor. Cysteine persulfide at Cys-247.

The protein localises to the periplasm. The enzyme catalyses L-cysteinyl-[SoxY protein] + thiosulfate + 2 Fe(III)-[cytochrome c] = S-sulfosulfanyl-L-cysteinyl-[SoxY protein] + 2 Fe(II)-[cytochrome c] + 2 H(+). It catalyses the reaction S-sulfanyl-L-cysteinyl-[SoxY protein] + thiosulfate + 2 Fe(III)-[cytochrome c] = S-(2-sulfodisulfanyl)-L-cysteinyl-[SoxY protein] + 2 Fe(II)-[cytochrome c] + 2 H(+). C-type diheme cytochrome, which is part of the SoxAX cytochrome complex involved in sulfur oxidation. The SoxAX complex catalyzes the formation of a heterodisulfide bond between the conserved cysteine residue on a sulfur carrier SoxYZ complex subunit SoxY and thiosulfate or other inorganic sulfur substrates. This leads to the liberation of two electrons, which may be transferred from the SoxAX complex to another cytochrome c that then channels them into the respiratory electron transport chain. Some electrons may be used for reductive CO(2) fixation. This is L-cysteine S-thiosulfotransferase subunit SoxA from Pseudaminobacter salicylatoxidans.